Reading from the N-terminus, the 406-residue chain is Renin (406 aa).

Positions 1 to 23 (MDGWRRMPRWGLLLLLWGSCTFG) are cleaved as a signal peptide. Residues 24–66 (LPTDTTTFKRIFLKRMPSIRESLKERGVDMARLGPEWSQPMKR) constitute a propeptide, activation peptide. N-linked (GlcNAc...) asparagine glycosylation is present at Asn71. The 318-residue stretch at 86-403 (YYGEIGIGTP…DRRNNRIGFA (318 aa)) folds into the Peptidase A1 domain. The active site involves Asp104. Residues Cys117 and Cys124 are joined by a disulfide bond. N-linked (GlcNAc...) asparagine glycosylation occurs at Asn141. Cys283 and Cys287 are disulfide-bonded. The active site involves Asp292. Cys325 and Cys362 are oxidised to a cystine.

This sequence belongs to the peptidase A1 family. In terms of assembly, interacts with ATP6AP2.

The protein resides in the secreted. It is found in the membrane. The catalysed reaction is Cleavage of Leu-|-Xaa bond in angiotensinogen to generate angiotensin I.. Interaction with ATP6AP2 results in a 5-fold increased efficiency in angiotensinogen processing. Functionally, renin is a highly specific endopeptidase, whose only known function is to generate angiotensin I from angiotensinogen in the plasma, initiating a cascade of reactions that produce an elevation of blood pressure and increased sodium retention by the kidney. This chain is Renin (REN), found in Homo sapiens (Human).